Consider the following 771-residue polypeptide: Tubulin monoglycylase TTLL3 (771 aa).

The disordered stretch occupies residues 70–106 (PRPSFSQPRRHDHETETTDEGDSSDEDDLGEEVERDD). Positions 86-106 (TTDEGDSSDEDDLGEEVERDD) are enriched in acidic residues. Residues 220-566 (EGEKMGEVHN…RRSERNTDTG (347 aa)) enclose the TTL domain. ATP-binding positions include Lys339, 345-346 (RG), 377-380 (QKYI), 390-392 (KFD), and 434-435 (CN). Arg345 is an a protein binding site. Residue Ser437 participates in L-glutamate binding. Asp512, Glu525, and Asn527 together coordinate Mg(2+). Glu525 serves as a coordination point for ATP. Disordered regions lie at residues 605-640 (LIQSHPEPLSKSTNHKSSLLSSPCTSGKENQSEEVK) and 682-713 (TELHHPQRLSHTQPQSDRPHTHRTRSNLPTLY). Residues 614-633 (SKSTNHKSSLLSSPCTSGKE) show a composition bias toward polar residues.

Mg(2+) serves as cofactor.

It is found in the cytoplasm. The protein resides in the cytoskeleton. It localises to the cell projection. The protein localises to the cilium. Its subcellular location is the cilium axoneme. It is found in the flagellum axoneme. The enzyme catalyses L-glutamyl-[protein] + glycine + ATP = glycyl-L-glutamyl-[protein] + ADP + phosphate + H(+). Its function is as follows. Monoglycylase which modifies alpha- and beta-tubulin, adding a single glycine on the gamma-carboxyl groups of specific glutamate residues to generate monoglycine side chains within the C-terminal tail of tubulin. Not involved in elongation step of the polyglycylation reaction. Preferentially glycylates a beta-tail peptide over the alpha-tail, although shifts its preference toward alpha-tail as beta-tail glutamylation increases. Competes with polyglutamylases for modification site on beta-tubulin substrate, thereby creating an anticorrelation between glycylation and glutamylation reactions. Not involved in elongation step of the polyglycylation reaction. In Danio rerio (Zebrafish), this protein is Tubulin monoglycylase TTLL3 (ttll3).